The sequence spans 533 residues: Tyrosine ammonia-lyase (533 aa).

Catalysis depends on Y57, which acts as the Proton donor/acceptor. H87 contacts substrate. Positions 146 to 148 form a cross-link, 5-imidazolinone (Ala-Gly); that stretch reads ASG. S147 carries the 2,3-didehydroalanine (Ser) modification. Residues N200 and R305 each coordinate substrate.

Belongs to the TAL/TAM family. As to quaternary structure, homotetramer; dimer of dimers. Post-translationally, contains an active site 4-methylidene-imidazol-5-one (MIO), which is formed autocatalytically by cyclization and dehydration of residues Ala-Ser-Gly.

It carries out the reaction L-tyrosine = (E)-4-coumarate + NH4(+). The enzyme catalyses L-tyrosine = 3-amino-3-(4-hydroxyphenyl)propanoate. Has ammonia-lyase and, to a lesser extent, aminomutase activity. Catalyzes the rearrangement of L-tyrosine to R-beta-tyrosine and S-beta-tyrosine. Does not accept L-histidine or L-phenylalanine as substrates. The polypeptide is Tyrosine ammonia-lyase (Cupriavidus metallidurans (strain ATCC 43123 / DSM 2839 / NBRC 102507 / CH34) (Ralstonia metallidurans)).